Consider the following 360-residue polypeptide: Dihydroorotate dehydrogenase (quinone) (360 aa).

FMN contacts are provided by residues 66 to 70 (AGFDK) and threonine 90. Lysine 70 serves as a coordination point for substrate. Residue 115–119 (NRMGF) coordinates substrate. 2 residues coordinate FMN: asparagine 143 and asparagine 176. Asparagine 176 serves as a coordination point for substrate. The active-site Nucleophile is serine 179. A substrate-binding site is contributed by asparagine 181. Positions 212 and 240 each coordinate FMN. A substrate-binding site is contributed by 241–242 (NT). FMN is bound by residues glycine 264, glycine 293, and 314-315 (YT).

It belongs to the dihydroorotate dehydrogenase family. Type 2 subfamily. Monomer. FMN serves as cofactor.

It is found in the cell membrane. It carries out the reaction (S)-dihydroorotate + a quinone = orotate + a quinol. It participates in pyrimidine metabolism; UMP biosynthesis via de novo pathway; orotate from (S)-dihydroorotate (quinone route): step 1/1. Its function is as follows. Catalyzes the conversion of dihydroorotate to orotate with quinone as electron acceptor. This Mycobacterium marinum (strain ATCC BAA-535 / M) protein is Dihydroorotate dehydrogenase (quinone).